We begin with the raw amino-acid sequence, 317 residues long: tRNA dimethylallyltransferase (317 aa).

14–21 (GPTAVGKT) serves as a coordination point for ATP. Residue 16–21 (TAVGKT) coordinates substrate. The segment at 39-42 (DSMQ) is interaction with substrate tRNA.

Belongs to the IPP transferase family. In terms of assembly, monomer. Mg(2+) is required as a cofactor.

It carries out the reaction adenosine(37) in tRNA + dimethylallyl diphosphate = N(6)-dimethylallyladenosine(37) in tRNA + diphosphate. In terms of biological role, catalyzes the transfer of a dimethylallyl group onto the adenine at position 37 in tRNAs that read codons beginning with uridine, leading to the formation of N6-(dimethylallyl)adenosine (i(6)A). The polypeptide is tRNA dimethylallyltransferase (Bacillus mycoides (strain KBAB4) (Bacillus weihenstephanensis)).